The primary structure comprises 277 residues: Bifunctional protein FolD (277 aa).

Residues 160 to 162 (GAS), S185, and I226 contribute to the NADP(+) site.

It belongs to the tetrahydrofolate dehydrogenase/cyclohydrolase family. In terms of assembly, homodimer.

The catalysed reaction is (6R)-5,10-methylene-5,6,7,8-tetrahydrofolate + NADP(+) = (6R)-5,10-methenyltetrahydrofolate + NADPH. The enzyme catalyses (6R)-5,10-methenyltetrahydrofolate + H2O = (6R)-10-formyltetrahydrofolate + H(+). It functions in the pathway one-carbon metabolism; tetrahydrofolate interconversion. Functionally, catalyzes the oxidation of 5,10-methylenetetrahydrofolate to 5,10-methenyltetrahydrofolate and then the hydrolysis of 5,10-methenyltetrahydrofolate to 10-formyltetrahydrofolate. This chain is Bifunctional protein FolD, found in Ruthia magnifica subsp. Calyptogena magnifica.